Here is a 183-residue protein sequence, read N- to C-terminus: Phosphopantetheine adenylyltransferase (183 aa).

Ser-8 lines the substrate pocket. ATP contacts are provided by residues 8 to 9 (SF) and His-16. Substrate-binding residues include Lys-40, Thr-72, and Arg-86. Residues 87 to 89 (GLR), Glu-97, and 122 to 128 (YSFLSSS) each bind ATP.

The protein belongs to the bacterial CoaD family. As to quaternary structure, homohexamer. It depends on Mg(2+) as a cofactor.

The protein resides in the cytoplasm. The catalysed reaction is (R)-4'-phosphopantetheine + ATP + H(+) = 3'-dephospho-CoA + diphosphate. The protein operates within cofactor biosynthesis; coenzyme A biosynthesis; CoA from (R)-pantothenate: step 4/5. Its function is as follows. Reversibly transfers an adenylyl group from ATP to 4'-phosphopantetheine, yielding dephospho-CoA (dPCoA) and pyrophosphate. The sequence is that of Phosphopantetheine adenylyltransferase from Nostoc punctiforme (strain ATCC 29133 / PCC 73102).